The chain runs to 531 residues: MDEESLESALQTYRAQLQQVELALGAGLDSSEQADLRQLQGDLKELIELTEASLVSVRKSSLLAALDEERPGRQEDAEYQAFREAITEAVEAPAAARGSGSETVPKAEAGPESAAGGQEEEEGEDEEELSGTKVSAPYYSSWGTLEYHNAMVVGTEEAEDGSAGVRVLYLYPTHKSLKPCPFFLEGKCRFKENCRFSHGQVVSLDELRPFQDPDLSSLQAGSACLAKHQDGLWHAARITDVDNGYYTVKFDSLLLREAVVEGDGILPPLRTEATESDSDSDGTGDSSYARVVGSDAVDSAQSSALCPSLAVVGSDAVDSGTCSSAFAGWEVHTRGIGSRLLTKMGYEFGKGLGRHAEGRVEPIHAVVLPRGKSLDQCVETLQKQTRVGKAGTNKPPRCRGRGARPGGRPAPRNVFDFLNEKLQGQAPGALEAGAAPAGRRSKDMYHASKSAKRALSLRLFQTEEKIERTQRDIRSIQEALARNAGRHSVASAQLQEKLAGAQRQLGQLRAQEAGLQQEQRKADTHKKMTEF.

N-acetylmethionine is present on M1. Positions 91-133 are disordered; it reads EAPAAARGSGSETVPKAEAGPESAAGGQEEEEGEDEEELSGTK. Over residues 107–117 the composition is skewed to low complexity; that stretch reads AEAGPESAAGG. A compositionally biased stretch (acidic residues) spans 118–129; sequence QEEEEGEDEEEL. Residues 175–201 form a C3H1-type zinc finger; sequence KSLKPCPFFLEGKCRFKENCRFSHGQV. The disordered stretch occupies residues 267–289; it reads PPLRTEATESDSDSDGTGDSSYA. The region spanning 333 to 379 is the G-patch domain; it reads TRGIGSRLLTKMGYEFGKGLGRHAEGRVEPIHAVVLPRGKSLDQCVE. S373 carries the phosphoserine modification. Disordered regions lie at residues 385–409, 426–446, and 509–531; these read TRVGKAGTNKPPRCRGRGARPGGRP, APGALEAGAAPAGRRSKDMYH, and RAQEAGLQQEQRKADTHKKMTEF. The span at 426–438 shows a compositional bias: low complexity; the sequence is APGALEAGAAPAG. A compositionally biased stretch (basic and acidic residues) spans 518 to 531; sequence EQRKADTHKKMTEF.

In terms of assembly, interacts with CHD4/Mi-2; the interaction is direct. In terms of processing, ubiquitinated in case of infection by HIV-1, leading to its degradation. Ubiquitination is mediated by the CUL4A-RBX1-DDB1-DCAF1/VPRBP complex that is hijacked by HIV-1 via interaction between HIV-1 Vpr and DCAF1/VPRBP. In terms of tissue distribution, widely expressed.

The protein resides in the nucleus. Transcription repressor that specifically binds the 5'-GGAG[GA]A[GA]A-3' consensus sequence. Represses transcription by recruiting the chromatin multiprotein complex NuRD to target promoters. Negatively regulates expression of EGFR, a gene involved in cell proliferation, survival and migration. Its ability to repress genes of the EGFR pathway suggest it may act as a tumor suppressor. Able to suppress breast carcinogenesis. Functionally, antagonizes the transcription repression by isoform 1 by competing for the binding of the NuRD complex. Does not bind DNA. The chain is Zinc finger CCCH-type with G patch domain-containing protein (ZGPAT) from Homo sapiens (Human).